We begin with the raw amino-acid sequence, 325 residues long: MAAMRKAVPRRLVGLASLRAVSTSSMGTLPKRVKIVEVGPRDGLQNEKNIVSTPVKIKLIDMLSEAGLSVIETTSFVSPKWVPQMGDHTEVLKGIQKFPGINYPVLTPNLKGFEAAVAAGAKEVAIFGAASELFTKKNINCSIEESFQRFDAILKAAQSANISVRGYVSCALGCPYEGKISPAKVAEVTKKLYSMGCYEISLGDTIGVGTPGIMKGMLSAVMQEVPLAALAVHCHDTYGQALANTLMALQMGVSVVDSSVAGLGGCPYAQGASGNLATEDLVYMLEGLGIHTGVNLQKLLEAGNFICQALNRKTSSKVAQATCKL.

The transit peptide at 1–27 directs the protein to the mitochondrion; it reads MAAMRKAVPRRLVGLASLRAVSTSSMG. The 268-residue stretch at 33–300 folds into the Pyruvate carboxyltransferase domain; sequence VKIVEVGPRD…HTGVNLQKLL (268 aa). Arg-41 contributes to the substrate binding site. Asp-42 is a binding site for a divalent metal cation. Lys-48 bears the N6-acetyllysine; alternate mark. Lys-48 bears the N6-succinyllysine; alternate mark. An N6-acetyllysine modification is found at Lys-111. An N6-acetyllysine; alternate mark is found at Lys-137 and Lys-179. N6-succinyllysine; alternate is present on residues Lys-137 and Lys-179. His-233 and His-235 together coordinate a divalent metal cation. Cys-266 is an active-site residue. Asn-275 is a binding site for a divalent metal cation. The short motif at 323–325 is the Microbody targeting signal element; sequence CKL. Lys-324 is subject to N6-acetyllysine.

It belongs to the HMG-CoA lyase family. As to quaternary structure, homodimer; disulfide-linked. Can also form homotetramers.

The protein localises to the mitochondrion matrix. Its subcellular location is the peroxisome. The catalysed reaction is (3S)-3-hydroxy-3-methylglutaryl-CoA = acetoacetate + acetyl-CoA. The protein operates within metabolic intermediate metabolism; (S)-3-hydroxy-3-methylglutaryl-CoA degradation; acetoacetate from (S)-3-hydroxy-3-methylglutaryl-CoA: step 1/1. Its function is as follows. Mitochondrial 3-hydroxy-3-methylglutaryl-CoA lyase that catalyzes a cation-dependent cleavage of (S)-3-hydroxy-3-methylglutaryl-CoA into acetyl-CoA and acetoacetate, a key step in ketogenesis. Terminal step in leucine catabolism. Ketone bodies (beta-hydroxybutyrate, acetoacetate and acetone) are essential as an alternative source of energy to glucose, as lipid precursors and as regulators of metabolism. This is Hydroxymethylglutaryl-CoA lyase, mitochondrial (HMGCL) from Pongo abelii (Sumatran orangutan).